Consider the following 278-residue polypeptide: uncharacterized protein (278 aa).

10 consecutive transmembrane segments (helical) span residues 1 to 21 (MLEILMSLTAAICWAFNGIAY), 30 to 50 (AFTANFHRTLFATVYFLPLAL), 56 to 76 (VVIDLQTALVLVISAMLSFYI), 92 to 112 (IALPASSTYPVYVVLLSTVIY), 116 to 136 (LSLNALISAILVFVAVYIIYG), 146 to 166 (LFYALLAAFSWALAILTLDFL), 170 to 190 (LPVSIVAFVRLLLCLILLSFT), 209 to 229 (GIFLLLGIMLFITAIKVSSSW), 230 to 250 (NVVQPSSTSPVFAAIFGAIFL), and 258 to 278 (LVAGIFVIILAILLLLLPPLQ). 2 consecutive EamA domains span residues 12-136 (ICWA…IIYG) and 154-274 (FSWA…LLLL).

Belongs to the EamA transporter family.

The protein resides in the cell membrane. This is an uncharacterized protein from Archaeoglobus fulgidus (strain ATCC 49558 / DSM 4304 / JCM 9628 / NBRC 100126 / VC-16).